The primary structure comprises 229 residues: Cytidylate kinase (229 aa).

Residue 12-20 coordinates ATP; sequence GPSGSGKGT.

It belongs to the cytidylate kinase family. Type 1 subfamily.

Its subcellular location is the cytoplasm. The catalysed reaction is CMP + ATP = CDP + ADP. The enzyme catalyses dCMP + ATP = dCDP + ADP. The sequence is that of Cytidylate kinase from Azotobacter vinelandii (strain DJ / ATCC BAA-1303).